Reading from the N-terminus, the 158-residue chain is Small ribosomal subunit protein uS7 (158 aa).

Belongs to the universal ribosomal protein uS7 family. Part of the 30S ribosomal subunit. Contacts proteins S9 and S11.

Its function is as follows. One of the primary rRNA binding proteins, it binds directly to 16S rRNA where it nucleates assembly of the head domain of the 30S subunit. Is located at the subunit interface close to the decoding center, probably blocks exit of the E-site tRNA. The protein is Small ribosomal subunit protein uS7 of Granulibacter bethesdensis (strain ATCC BAA-1260 / CGDNIH1).